The following is a 156-amino-acid chain: Small ribosomal subunit protein uS7 (156 aa).

Belongs to the universal ribosomal protein uS7 family. In terms of assembly, part of the 30S ribosomal subunit. Contacts proteins S9 and S11.

Functionally, one of the primary rRNA binding proteins, it binds directly to 16S rRNA where it nucleates assembly of the head domain of the 30S subunit. Is located at the subunit interface close to the decoding center, probably blocks exit of the E-site tRNA. The protein is Small ribosomal subunit protein uS7 of Natranaerobius thermophilus (strain ATCC BAA-1301 / DSM 18059 / JW/NM-WN-LF).